Reading from the N-terminus, the 213-residue chain is Holliday junction resolvase RecU (213 aa).

Mg(2+)-binding residues include Thr-99, Asp-101, Glu-114, and Gln-133.

Belongs to the RecU family. Mg(2+) is required as a cofactor.

The protein resides in the cytoplasm. It catalyses the reaction Endonucleolytic cleavage at a junction such as a reciprocal single-stranded crossover between two homologous DNA duplexes (Holliday junction).. Endonuclease that resolves Holliday junction intermediates in genetic recombination. Cleaves mobile four-strand junctions by introducing symmetrical nicks in paired strands. Promotes annealing of linear ssDNA with homologous dsDNA. Required for DNA repair, homologous recombination and chromosome segregation. This chain is Holliday junction resolvase RecU, found in Lactococcus lactis subsp. cremoris (strain SK11).